A 771-amino-acid chain; its full sequence is Kinase suppressor of Ras A (771 aa).

Residues 152–169 (SRTSSGSTDEPSGQSTPA) are compositionally biased toward polar residues. A disordered region spans residues 152-172 (SRTSSGSTDEPSGQSTPAIVT). The segment at 215 to 269 (PHKWHRSTKFRFSGDAVCHFCQRPLGFGFLNAWEKCRSCKWKVHTQCKGRVGDSC) adopts a Phorbol-ester/DAG-type zinc-finger fold. Disordered regions lie at residues 290–339 (GMWK…ISGN) and 414–433 (DSTG…EAVD). Low complexity predominate over residues 318–331 (SSSSTNSSAPSTPA). The 272-residue stretch at 477 to 748 (DKQAPIIGRG…TDINLKLTAL (272 aa)) folds into the Protein kinase domain. ATP contacts are provided by residues 483–491 (IGRGRFGKV) and Lys-503. Catalysis depends on Asp-600, which acts as the Proton acceptor.

The protein belongs to the protein kinase superfamily. TKL Ser/Thr protein kinase family. In terms of assembly, interacts with mek-2. Mg(2+) is required as a cofactor.

The enzyme catalyses L-seryl-[protein] + ATP = O-phospho-L-seryl-[protein] + ADP + H(+). It carries out the reaction L-threonyl-[protein] + ATP = O-phospho-L-threonyl-[protein] + ADP + H(+). Serine/threonine-protein kinase which positively regulates Ras-mediated signaling probably acting at the level of let-60/ras or/and lin-45/raf. Involved in sex myoblast migration. Plays a role in responses to M.nematophilum-mediated bacterial infection by promoting tail swelling and preventing constipation. Functions redundantly with ksr-2 in the Ras-mediated regulation of larval survival, the development of excretory canal and in mpk-1 phosphorylation in somatic cells. In addition, involved in determining vulval precursor cell fate during vulval induction independently of its kinase activity. Plays a role in egg-laying. The sequence is that of Kinase suppressor of Ras A from Caenorhabditis elegans.